The following is a 175-amino-acid chain: ATP synthase subunit delta (175 aa).

The protein belongs to the ATPase delta chain family. As to quaternary structure, F-type ATPases have 2 components, F(1) - the catalytic core - and F(0) - the membrane proton channel. F(1) has five subunits: alpha(3), beta(3), gamma(1), delta(1), epsilon(1). F(0) has three main subunits: a(1), b(2) and c(10-14). The alpha and beta chains form an alternating ring which encloses part of the gamma chain. F(1) is attached to F(0) by a central stalk formed by the gamma and epsilon chains, while a peripheral stalk is formed by the delta and b chains.

It is found in the cell inner membrane. In terms of biological role, f(1)F(0) ATP synthase produces ATP from ADP in the presence of a proton or sodium gradient. F-type ATPases consist of two structural domains, F(1) containing the extramembraneous catalytic core and F(0) containing the membrane proton channel, linked together by a central stalk and a peripheral stalk. During catalysis, ATP synthesis in the catalytic domain of F(1) is coupled via a rotary mechanism of the central stalk subunits to proton translocation. This protein is part of the stalk that links CF(0) to CF(1). It either transmits conformational changes from CF(0) to CF(1) or is implicated in proton conduction. This is ATP synthase subunit delta from Xanthomonas axonopodis pv. citri (strain 306).